A 169-amino-acid chain; its full sequence is Transcription antitermination protein NusB (169 aa).

The interval 147–169 (RGLIDQSFSRPQKPESEATEIEE) is disordered.

The protein belongs to the NusB family.

Functionally, involved in transcription antitermination. Required for transcription of ribosomal RNA (rRNA) genes. Binds specifically to the boxA antiterminator sequence of the ribosomal RNA (rrn) operons. This is Transcription antitermination protein NusB from Chlorobium chlorochromatii (strain CaD3).